Consider the following 232-residue polypeptide: Biosynthetic peptidoglycan transglycosylase (232 aa).

A helical membrane pass occupies residues 12 to 31; sequence YLLWFMAASVVLVAVLRWVP.

The protein belongs to the glycosyltransferase 51 family.

It localises to the cell inner membrane. It catalyses the reaction [GlcNAc-(1-&gt;4)-Mur2Ac(oyl-L-Ala-gamma-D-Glu-L-Lys-D-Ala-D-Ala)](n)-di-trans,octa-cis-undecaprenyl diphosphate + beta-D-GlcNAc-(1-&gt;4)-Mur2Ac(oyl-L-Ala-gamma-D-Glu-L-Lys-D-Ala-D-Ala)-di-trans,octa-cis-undecaprenyl diphosphate = [GlcNAc-(1-&gt;4)-Mur2Ac(oyl-L-Ala-gamma-D-Glu-L-Lys-D-Ala-D-Ala)](n+1)-di-trans,octa-cis-undecaprenyl diphosphate + di-trans,octa-cis-undecaprenyl diphosphate + H(+). The protein operates within cell wall biogenesis; peptidoglycan biosynthesis. Its function is as follows. Peptidoglycan polymerase that catalyzes glycan chain elongation from lipid-linked precursors. The protein is Biosynthetic peptidoglycan transglycosylase of Pseudomonas aeruginosa (strain ATCC 15692 / DSM 22644 / CIP 104116 / JCM 14847 / LMG 12228 / 1C / PRS 101 / PAO1).